Reading from the N-terminus, the 422-residue chain is Proline--tRNA ligase (422 aa).

Belongs to the class-II aminoacyl-tRNA synthetase family. ProS type 2 subfamily. In terms of assembly, homodimer.

The protein localises to the cytoplasm. It catalyses the reaction tRNA(Pro) + L-proline + ATP = L-prolyl-tRNA(Pro) + AMP + diphosphate. Its function is as follows. Catalyzes the attachment of proline to tRNA(Pro) in a two-step reaction: proline is first activated by ATP to form Pro-AMP and then transferred to the acceptor end of tRNA(Pro). The chain is Proline--tRNA ligase from Wolbachia sp. subsp. Drosophila simulans (strain wRi).